Here is a 48-residue protein sequence, read N- to C-terminus: Protein PsbN (48 aa).

Residues 12-34 (LLIAMVTITFGLTGYGLYTAFGP) form a helical membrane-spanning segment.

This sequence belongs to the PsbN family.

It localises to the cellular thylakoid membrane. Its function is as follows. May play a role in photosystem I and II biogenesis. This chain is Protein PsbN, found in Prochlorococcus marinus (strain MIT 9313).